Consider the following 101-residue polypeptide: Small ribosomal subunit protein uS14 (101 aa).

The protein belongs to the universal ribosomal protein uS14 family. As to quaternary structure, part of the 30S ribosomal subunit. Contacts proteins S3 and S10.

Functionally, binds 16S rRNA, required for the assembly of 30S particles and may also be responsible for determining the conformation of the 16S rRNA at the A site. In Nitrosomonas europaea (strain ATCC 19718 / CIP 103999 / KCTC 2705 / NBRC 14298), this protein is Small ribosomal subunit protein uS14.